A 363-amino-acid chain; its full sequence is MERLSGEKEQSVEAFGWAARDSSGHLSPFVFSRRKTGEEEVRVKVLYCGICHSDLHCLKNEWHSSIYPLVPGHEIIGEVSEIGNKVSKFNLGDKVGVGCIVDSCRTCESCREDQENYCTKAIATYNGVHHDGTINYGGYSDHIVVDERYAVKIPHTLPLVSAAPLLCAGISMYSPMKYFGLTGPDKHVGIVGLGGLGHIGVRFAKAFGTKVTVVSSTTGKSKDALDTLGADGFLVSTDEDQMKAAMGTMDGIIDTVSASHSISPLIGLLKSNGKLVLLGATEKPFDISAFSLILGRKSIAGSGIGGMQETQEMIDFAAEHGIKAEIEIISMDYVNTAMDRLAKGDVRYRFVIDISNTLAATRS.

Cys51 serves as a coordination point for Zn(2+). Residue Ser53 coordinates NADP(+). The Zn(2+) site is built by His73, Glu74, Cys104, Cys107, Cys110, Cys118, and Cys167. NADP(+)-binding positions include Ser171, 192–197, 215–220, Thr255, Gly279, and 302–304; these read GLGGLG, SSTTGK, and SGI.

Belongs to the zinc-containing alcohol dehydrogenase family. As to quaternary structure, homodimer. The cofactor is Zn(2+). In terms of tissue distribution, expressed in the primary and lateral roots, and root caps. Expressed in the hypocotyl, cotyledon veins and hydathodes. In stems, expressed in the vascular cambium, interfascicular cambium and developing xylem. Expressed in the style, anthers, stamen filaments, vascular tissues of sepals, stigmatic regions in flowers, and abscission and style regions of siliques.

The enzyme catalyses (E)-cinnamyl alcohol + NADP(+) = (E)-cinnamaldehyde + NADPH + H(+). It carries out the reaction (E)-coniferol + NADP(+) = (E)-coniferaldehyde + NADPH + H(+). It catalyses the reaction (E)-sinapyl alcohol + NADP(+) = (E)-sinapaldehyde + NADPH + H(+). The catalysed reaction is (E)-4-coumaroyl alcohol + NADP(+) = (E)-4-coumaraldehyde + NADPH + H(+). The enzyme catalyses (E)-caffeyl alcohol + NADP(+) = (E)-caffeyl aldehyde + NADPH + H(+). It participates in aromatic compound metabolism; phenylpropanoid biosynthesis. Involved in lignin biosynthesis. Catalyzes the final step specific for the production of lignin monomers. Catalyzes the NADPH-dependent reduction of coniferaldehyde, 5-hydroxyconiferaldehyde, sinapaldehyde, 4-coumaraldehyde and caffeyl aldehyde to their respective alcohols. The protein is Probable cinnamyl alcohol dehydrogenase 6 (CAD6) of Arabidopsis thaliana (Mouse-ear cress).